We begin with the raw amino-acid sequence, 107 residues long: MSAIPLNRILPLGFLLIFSFISLSSCMEFVEDPNNQGGLNLQQRLGNQWAVGHLMGKKSLQDTDFEEMESFAKRNVENMKAESERELRHAQLVVRNILEQYLKNMQN.

A signal peptide spans 1–26 (MSAIPLNRILPLGFLLIFSFISLSSC). Residues 27–41 (MEFVEDPNNQGGLNL) constitute a propeptide that is removed on maturation. Gln-42 is subject to Pyrrolidone carboxylic acid. Met-55 is modified (methionine amide). Positions 56–107 (GKKSLQDTDFEEMESFAKRNVENMKAESERELRHAQLVVRNILEQYLKNMQN) are excised as a propeptide.

In terms of tissue distribution, expressed by the skin glands.

It is found in the secreted. Functionally, stimulates smooth muscle contraction. Role in induction of hypothermia, stimulation of DNA replication and release of many gastrointestinal hormones. Possesses insulin-releasing activity. This Bombina variegata (Yellow-bellied toad) protein is Bombesin.